Here is a 99-residue protein sequence, read N- to C-terminus: MKFIAVVAALTASLAMAAPTESSTDTTYIACPISLYGNAQCCATDILGLANLDCESPTDVPRDAGHFQRTCADVGKRARCCAIPVLGQALLCIQPAGAN.

The signal sequence occupies residues 1 to 26; sequence MKFIAVVAALTASLAMAAPTESSTDT. 4 disulfides stabilise this stretch: cysteine 31–cysteine 80, cysteine 41–cysteine 71, cysteine 42–cysteine 54, and cysteine 81–cysteine 92.

Belongs to the cerato-ulmin hydrophobin family. As to quaternary structure, homotetramer. Further self-assembles to form highly ordered films at water-air interfaces through intermolecular interactions.

It is found in the secreted. The protein localises to the cell wall. Functionally, aerial growth, conidiation, and dispersal of filamentous fungi in the environment rely upon a capability of their secreting small amphipathic proteins called hydrophobins (HPBs) with low sequence identity. Class I can self-assemble into an outermost layer of rodlet bundles on aerial cell surfaces, conferring cellular hydrophobicity that supports fungal growth, development and dispersal; whereas Class II form highly ordered films at water-air interfaces through intermolecular interactions but contribute nothing to the rodlet structure. HFB1 is a class II hydrophobin that shows antifungal activity against pathogenic and opportunistic fungi such as Cryptococcus neoformans, Nakaseomyces glabrataa, or Candida tropicalis. The sequence is that of Class II hydrophobin 1 from Sodiomyces alkalinus (strain CBS 110278 / VKM F-3762 / F11) (Alkaliphilic filamentous fungus).